The chain runs to 98 residues: Large ribosomal subunit protein bL21 (98 aa).

Belongs to the bacterial ribosomal protein bL21 family. In terms of assembly, part of the 50S ribosomal subunit. Contacts protein L20.

Its function is as follows. This protein binds to 23S rRNA in the presence of protein L20. The sequence is that of Large ribosomal subunit protein bL21 from Aquifex aeolicus (strain VF5).